The chain runs to 999 residues: Probable K(+)/H(+) antiporter subunit A/B (999 aa).

The interval 1 to 20 (MTRPASVLAGPKSRPPIHSQ) is disordered. Helical transmembrane passes span 31 to 48 (LLSV…IAIF), 63 to 85 (AIAL…GGVL), 106 to 128 (FAWL…ARYY), 138 to 160 (FFAL…NLIL), 162 to 181 (AVFW…YWHH), 191 to 213 (MALT…IGKI), 233 to 255 (PLYG…QFPF), 270 to 292 (SAYL…FWPV), 299 to 321 (WFWI…AIFQ), 336 to 358 (LGLI…VFHI), 389 to 411 (GLFH…MAGV), 442 to 464 (YVAT…GVFF), 488 to 510 (FLVL…FLHT), 530 to 552 (GWNI…YFLM), 604 to 621 (RLLV…LLLG), 636 to 653 (AFAL…GSAY), 660 to 682 (LASL…WLSA), 686 to 708 (AVTQ…RWLP), 729 to 751 (LRDL…TVMT), 788 to 807 (TLGE…ALLL), 846 to 868 (FIPA…FLFL), 878 to 900 (FAAG…TRWV), 913 to 935 (SIGL…PFLT), and 955 to 977 (ILFD…IALA).

It in the N-terminal section; belongs to the CPA3 antiporters (TC 2.A.63) subunit A family. In the C-terminal section; belongs to the CPA3 antiporters (TC 2.A.63) subunit B family. In terms of assembly, may form a heterooligomeric complex that consists of six subunits: PhaAB, PhaC, PhaD, PhaE, PhaF and PhaG.

Its subcellular location is the cell membrane. Functionally, part of a K(+) efflux system which is required for the adaptation of R.meliloti to alkaline pH as well as for the infection process during symbiotic nodule development. The chain is Probable K(+)/H(+) antiporter subunit A/B (phaAB) from Rhizobium meliloti (strain 1021) (Ensifer meliloti).